We begin with the raw amino-acid sequence, 386 residues long: Lipoyl synthase, mitochondrial (386 aa).

Residues 1-48 (MHGRRHLAASLTRALTQAPSRSISSTPSLLQTLDPSVPSPSPPPAAEP) are disordered. The segment covering 13 to 34 (RALTQAPSRSISSTPSLLQTLD) has biased composition (polar residues). Positions 37–46 (VPSPSPPPAA) are enriched in pro residues. Residues Cys113, Cys118, Cys124, Cys144, Cys148, Cys151, and Ser360 each coordinate [4Fe-4S] cluster. The Radical SAM core domain maps to 129-349 (ETGTATATIM…RALGVEMGFR (221 aa)).

The protein belongs to the radical SAM superfamily. Lipoyl synthase family. Requires [4Fe-4S] cluster as cofactor.

It is found in the mitochondrion. It carries out the reaction [[Fe-S] cluster scaffold protein carrying a second [4Fe-4S](2+) cluster] + N(6)-octanoyl-L-lysyl-[protein] + 2 oxidized [2Fe-2S]-[ferredoxin] + 2 S-adenosyl-L-methionine + 4 H(+) = [[Fe-S] cluster scaffold protein] + N(6)-[(R)-dihydrolipoyl]-L-lysyl-[protein] + 4 Fe(3+) + 2 hydrogen sulfide + 2 5'-deoxyadenosine + 2 L-methionine + 2 reduced [2Fe-2S]-[ferredoxin]. It functions in the pathway protein modification; protein lipoylation via endogenous pathway; protein N(6)-(lipoyl)lysine from octanoyl-[acyl-carrier-protein]: step 2/2. Catalyzes the radical-mediated insertion of two sulfur atoms into the C-6 and C-8 positions of the octanoyl moiety bound to the lipoyl domains of lipoate-dependent enzymes, thereby converting the octanoylated domains into lipoylated derivatives. This is Lipoyl synthase, mitochondrial from Sorghum bicolor (Sorghum).